The sequence spans 154 residues: MIIKNLQEFYRLLIPNAPLIAIDYGSKKLGIALSNQELSIAMPLNTITEINKKIVITSLLNIIEKYKVCGVIIGLPIDMSGAVTEQTNIVMKFAEELAKSINLPIYLQDERLTTKAANNLLKSFGVKRKDRNNNDDAVAASMILETVLDSIKNI.

This sequence belongs to the YqgF nuclease family.

It localises to the cytoplasm. Could be a nuclease involved in processing of the 5'-end of pre-16S rRNA. The chain is Putative pre-16S rRNA nuclease from Rickettsia africae (strain ESF-5).